We begin with the raw amino-acid sequence, 102 residues long: Putative ubiquitin-like protein FUBI-like protein ENSP00000310146 (102 aa).

Residues 23–99 (LCPQVAYVRA…LEVVGRRLGV (77 aa)) enclose the Ubiquitin-like domain.

The sequence is that of Putative ubiquitin-like protein FUBI-like protein ENSP00000310146 from Homo sapiens (Human).